Consider the following 186-residue polypeptide: MIAASDLKAGMTFEQDGKLIKVMEASHHKPGKGNTVMRMKLKDVRTGSTTDTTMRPDEKVKKAHIDTKPVQYLYSQDDMAIFMDLETYEQYEVPTALIEEELKYLLENMEVKIQFYGEEVIGLTLPTTVILRVAETQPSIKGATVTGSGKPATMETGLVVNVPDFVEADELLEINTAEGTYLKRAK.

The protein belongs to the elongation factor P family.

The protein resides in the cytoplasm. It participates in protein biosynthesis; polypeptide chain elongation. Functionally, involved in peptide bond synthesis. Stimulates efficient translation and peptide-bond synthesis on native or reconstituted 70S ribosomes in vitro. Probably functions indirectly by altering the affinity of the ribosome for aminoacyl-tRNA, thus increasing their reactivity as acceptors for peptidyl transferase. The protein is Elongation factor P of Enterococcus faecalis (strain ATCC 700802 / V583).